A 256-amino-acid polypeptide reads, in one-letter code: Phosphatidylglycerol--prolipoprotein diacylglyceryl transferase (256 aa).

A run of 3 helical transmembrane segments spans residues 19–39 (VHWY…LGYW), 56–76 (LIFY…MLFY), and 91–111 (IWEG…AAWL). A 1,2-diacyl-sn-glycero-3-phospho-(1'-sn-glycerol) is bound at residue Arg139. Residues 231–251 (FGWLTMGQVLSIPMLLIGIWL) form a helical membrane-spanning segment.

It belongs to the Lgt family.

The protein localises to the cell inner membrane. It carries out the reaction L-cysteinyl-[prolipoprotein] + a 1,2-diacyl-sn-glycero-3-phospho-(1'-sn-glycerol) = an S-1,2-diacyl-sn-glyceryl-L-cysteinyl-[prolipoprotein] + sn-glycerol 1-phosphate + H(+). The protein operates within protein modification; lipoprotein biosynthesis (diacylglyceryl transfer). In terms of biological role, catalyzes the transfer of the diacylglyceryl group from phosphatidylglycerol to the sulfhydryl group of the N-terminal cysteine of a prolipoprotein, the first step in the formation of mature lipoproteins. In Legionella pneumophila (strain Lens), this protein is Phosphatidylglycerol--prolipoprotein diacylglyceryl transferase.